A 209-amino-acid chain; its full sequence is Uracil phosphoribosyltransferase (209 aa).

Residues Arg79, Arg104, and 131 to 139 contribute to the 5-phospho-alpha-D-ribose 1-diphosphate site; that span reads DPMLATGAS. Residues Ile194 and 199 to 201 contribute to the uracil site; that span reads GDA. Asp200 is a 5-phospho-alpha-D-ribose 1-diphosphate binding site.

It belongs to the UPRTase family. It depends on Mg(2+) as a cofactor.

The enzyme catalyses UMP + diphosphate = 5-phospho-alpha-D-ribose 1-diphosphate + uracil. It participates in pyrimidine metabolism; UMP biosynthesis via salvage pathway; UMP from uracil: step 1/1. Allosterically activated by GTP. Its function is as follows. Catalyzes the conversion of uracil and 5-phospho-alpha-D-ribose 1-diphosphate (PRPP) to UMP and diphosphate. The protein is Uracil phosphoribosyltransferase of Staphylococcus saprophyticus subsp. saprophyticus (strain ATCC 15305 / DSM 20229 / NCIMB 8711 / NCTC 7292 / S-41).